A 446-amino-acid polypeptide reads, in one-letter code: tRNA-2-methylthio-N(6)-dimethylallyladenosine synthase (446 aa).

An MTTase N-terminal domain is found at 6-122 (RRYHITTFGC…LGDLLQQVFD (117 aa)). [4Fe-4S] cluster contacts are provided by Cys15, Cys51, Cys85, Cys157, Cys161, and Cys164. The Radical SAM core domain maps to 143–380 (RDSNITAWVN…NHLVATKAAE (238 aa)). Residues 383 to 446 (QRYLGRIEEI…RPFSLTGVIF (64 aa)) enclose the TRAM domain.

Belongs to the methylthiotransferase family. MiaB subfamily. As to quaternary structure, monomer. The cofactor is [4Fe-4S] cluster.

The protein localises to the cytoplasm. It carries out the reaction N(6)-dimethylallyladenosine(37) in tRNA + (sulfur carrier)-SH + AH2 + 2 S-adenosyl-L-methionine = 2-methylsulfanyl-N(6)-dimethylallyladenosine(37) in tRNA + (sulfur carrier)-H + 5'-deoxyadenosine + L-methionine + A + S-adenosyl-L-homocysteine + 2 H(+). Functionally, catalyzes the methylthiolation of N6-(dimethylallyl)adenosine (i(6)A), leading to the formation of 2-methylthio-N6-(dimethylallyl)adenosine (ms(2)i(6)A) at position 37 in tRNAs that read codons beginning with uridine. In Microcystis aeruginosa (strain NIES-843 / IAM M-2473), this protein is tRNA-2-methylthio-N(6)-dimethylallyladenosine synthase.